A 127-amino-acid polypeptide reads, in one-letter code: Ribonuclease P protein component (127 aa).

It belongs to the RnpA family. In terms of assembly, consists of a catalytic RNA component (M1 or rnpB) and a protein subunit.

It catalyses the reaction Endonucleolytic cleavage of RNA, removing 5'-extranucleotides from tRNA precursor.. Its function is as follows. RNaseP catalyzes the removal of the 5'-leader sequence from pre-tRNA to produce the mature 5'-terminus. It can also cleave other RNA substrates such as 4.5S RNA. The protein component plays an auxiliary but essential role in vivo by binding to the 5'-leader sequence and broadening the substrate specificity of the ribozyme. This Prochlorococcus marinus (strain SARG / CCMP1375 / SS120) protein is Ribonuclease P protein component.